A 502-amino-acid polypeptide reads, in one-letter code: Probable cytosol aminopeptidase (502 aa).

Positions 269 and 274 each coordinate Mn(2+). Lys-281 is an active-site residue. 3 residues coordinate Mn(2+): Asp-292, Asp-351, and Glu-353. The active site involves Arg-355.

Belongs to the peptidase M17 family. It depends on Mn(2+) as a cofactor.

The protein localises to the cytoplasm. The enzyme catalyses Release of an N-terminal amino acid, Xaa-|-Yaa-, in which Xaa is preferably Leu, but may be other amino acids including Pro although not Arg or Lys, and Yaa may be Pro. Amino acid amides and methyl esters are also readily hydrolyzed, but rates on arylamides are exceedingly low.. It catalyses the reaction Release of an N-terminal amino acid, preferentially leucine, but not glutamic or aspartic acids.. Functionally, presumably involved in the processing and regular turnover of intracellular proteins. Catalyzes the removal of unsubstituted N-terminal amino acids from various peptides. This chain is Probable cytosol aminopeptidase, found in Vibrio parahaemolyticus serotype O3:K6 (strain RIMD 2210633).